Here is a 282-residue protein sequence, read N- to C-terminus: Undecaprenyl-diphosphatase (282 aa).

Transmembrane regions (helical) follow at residues 1–21, 40–60, 85–105, 117–137, 196–216, 229–249, and 258–278; these read MTLF…FLPV, GAAF…IYFY, AAMG…GLLF, YWVS…EWSV, FSFL…LYHT, AITA…AFLI, and SIFI…IAAG.

This sequence belongs to the UppP family.

The protein resides in the cell inner membrane. The enzyme catalyses di-trans,octa-cis-undecaprenyl diphosphate + H2O = di-trans,octa-cis-undecaprenyl phosphate + phosphate + H(+). Catalyzes the dephosphorylation of undecaprenyl diphosphate (UPP). Confers resistance to bacitracin. This Chlorobium phaeobacteroides (strain DSM 266 / SMG 266 / 2430) protein is Undecaprenyl-diphosphatase.